We begin with the raw amino-acid sequence, 341 residues long: uncharacterized protein (341 aa).

WD repeat units lie at residues 19–59 (SLGS…QVHT), 106–145 (GHTD…RCLG), 252–293 (PFSN…HHKG), and 303–341 (VSQS…ALTS).

The protein resides in the cytoplasm. The protein localises to the nucleus. This is an uncharacterized protein from Schizosaccharomyces pombe (strain 972 / ATCC 24843) (Fission yeast).